A 169-amino-acid polypeptide reads, in one-letter code: Peptide methionine sulfoxide reductase MsrA (169 aa).

The active site involves cysteine 11.

This sequence belongs to the MsrA Met sulfoxide reductase family.

It carries out the reaction L-methionyl-[protein] + [thioredoxin]-disulfide + H2O = L-methionyl-(S)-S-oxide-[protein] + [thioredoxin]-dithiol. It catalyses the reaction [thioredoxin]-disulfide + L-methionine + H2O = L-methionine (S)-S-oxide + [thioredoxin]-dithiol. In terms of biological role, has an important function as a repair enzyme for proteins that have been inactivated by oxidation. Catalyzes the reversible oxidation-reduction of methionine sulfoxide in proteins to methionine. This is Peptide methionine sulfoxide reductase MsrA from Leifsonia xyli subsp. xyli (strain CTCB07).